The primary structure comprises 294 residues: MQNFMVLLLLIVAVVAIMFVLPKNNKTLLHHMRRRRRELKDLLKSKKIIGAKNLMEFVKKYTQIDKTCAYEGPIPMPAEFSTMSADNLQLLDKCGAVRSSLNSWAIATWAENSVVKTMENLQSTMECVNQLNLVPDTYNRFQELVTACFSAVPPPPPKNPNNISNLPIGVYGSPYGIYGMNYNLGTSYQGVTNGFVSDSRGWRPDDYFNYNAQGSELIDGTNTLMTAQMLQQYELPRIGFGPYMSRSEIDAEVLPKYEPSQWIVNNGPVRPWEPKYPIMTIPPTPIPLLGTSNM.

Positions 1–16 (MQNFMVLLLLIVAVVA) are cleaved as a signal peptide. 2 N-linked (GlcNAc...) asparagine; by host glycosylation sites follow: N25 and N162.

This is an uncharacterized protein from Acheta domesticus (House cricket).